The sequence spans 358 residues: MRVMNFSAGPSNLPDEVLKEAQEHLYDYHGKGFSIMEVSHRGKVFEEVHFEAIKMAKELYGVNDDYEVLLMQGGASLQFAMIPMNLYMGGVCEFANTGVWTKKAIKEAEILGVNTKIVASSQESEFDHIPQFEFSDNADYAYICSNNTIYGTQYKCYPKTKSPLIIDASSDFFSKKIDFSNIAMLFGGVQKNAGISGLACAFVRKDMIERSKNKNIPSMLKYSIYAENDSLFNTPATFAIYMFNLEMKWLLNQGGLDKINEQNIQKAKILYDVIDESNGFYKGHAKKENRSLMNVSFNIAHDKNLEPVFVKEAEENGMIGLKGHKILGGIRASIYNSISIEKVQKLSEFMKNFAKKHA.

R41 is an L-glutamate binding site. Pyridoxal 5'-phosphate-binding positions include 75 to 76 (AS), W100, T148, D167, and Q190. K191 bears the N6-(pyridoxal phosphate)lysine mark. Residue 233-234 (NT) participates in pyridoxal 5'-phosphate binding.

It belongs to the class-V pyridoxal-phosphate-dependent aminotransferase family. SerC subfamily. Homodimer. The cofactor is pyridoxal 5'-phosphate.

It is found in the cytoplasm. The catalysed reaction is O-phospho-L-serine + 2-oxoglutarate = 3-phosphooxypyruvate + L-glutamate. It carries out the reaction 4-(phosphooxy)-L-threonine + 2-oxoglutarate = (R)-3-hydroxy-2-oxo-4-phosphooxybutanoate + L-glutamate. The protein operates within amino-acid biosynthesis; L-serine biosynthesis; L-serine from 3-phospho-D-glycerate: step 2/3. It functions in the pathway cofactor biosynthesis; pyridoxine 5'-phosphate biosynthesis; pyridoxine 5'-phosphate from D-erythrose 4-phosphate: step 3/5. Its function is as follows. Catalyzes the reversible conversion of 3-phosphohydroxypyruvate to phosphoserine and of 3-hydroxy-2-oxo-4-phosphonooxybutanoate to phosphohydroxythreonine. The protein is Phosphoserine aminotransferase of Campylobacter lari (strain RM2100 / D67 / ATCC BAA-1060).